The following is a 592-amino-acid chain: NADH-quinone oxidoreductase subunit C/D (592 aa).

The segment at 1–183 (MLTEFNSIPA…GPYILTEEKE (183 aa)) is NADH dehydrogenase I subunit C. Residues 207-592 (DFMFLNLGPN…IDFVMADVDR (386 aa)) form an NADH dehydrogenase I subunit D region.

The protein in the N-terminal section; belongs to the complex I 30 kDa subunit family. It in the C-terminal section; belongs to the complex I 49 kDa subunit family. In terms of assembly, NDH-1 is composed of 13 different subunits. Subunits NuoB, CD, E, F, and G constitute the peripheral sector of the complex.

The protein resides in the cell inner membrane. It catalyses the reaction a quinone + NADH + 5 H(+)(in) = a quinol + NAD(+) + 4 H(+)(out). Its function is as follows. NDH-1 shuttles electrons from NADH, via FMN and iron-sulfur (Fe-S) centers, to quinones in the respiratory chain. The immediate electron acceptor for the enzyme in this species is believed to be ubiquinone. Couples the redox reaction to proton translocation (for every two electrons transferred, four hydrogen ions are translocated across the cytoplasmic membrane), and thus conserves the redox energy in a proton gradient. In Acidiphilium cryptum (strain JF-5), this protein is NADH-quinone oxidoreductase subunit C/D.